The following is a 370-amino-acid chain: S-adenosylmethionine decarboxylase proenzyme (370 aa).

Position 28 (Phe-28) interacts with substrate. Residues Glu-29 and Glu-32 contribute to the active site. Glu-85 is a substrate binding site. The active-site Schiff-base intermediate with substrate; via pyruvic acid is Ser-86. Ser-86 is modified (pyruvic acid (Ser); by autocatalysis). The Proton donor; for catalytic activity role is filled by Cys-100. Catalysis depends on proton acceptor; for processing activity residues Ser-249 and His-262. Glu-266 serves as a coordination point for substrate.

The protein belongs to the eukaryotic AdoMetDC family. As to quaternary structure, forms a heterodimer with catalytically inactive AdoMetDC prozyme; heterodimerization is required to activate AdoMetDC. It depends on pyruvate as a cofactor. Is synthesized initially as an inactive proenzyme. Formation of the active enzyme involves a self-maturation process in which the active site pyruvoyl group is generated from an internal serine residue via an autocatalytic post-translational modification. Two non-identical subunits are generated from the proenzyme in this reaction, and the pyruvate is formed at the N-terminus of the alpha chain, which is derived from the carboxyl end of the proenzyme. The post-translation cleavage follows an unusual pathway, termed non-hydrolytic serinolysis, in which the side chain hydroxyl group of the serine supplies its oxygen atom to form the C-terminus of the beta chain, while the remainder of the serine residue undergoes an oxidative deamination to produce ammonia and the pyruvoyl group blocking the N-terminus of the alpha chain.

It carries out the reaction S-adenosyl-L-methionine + H(+) = S-adenosyl 3-(methylsulfanyl)propylamine + CO2. It functions in the pathway amine and polyamine biosynthesis; S-adenosylmethioninamine biosynthesis; S-adenosylmethioninamine from S-adenosyl-L-methionine: step 1/1. Its activity is regulated as follows. Allosterically activated by AdoMetDC prozyme. Activated by putrescine and to a lesser extent by spermidine, norspermidine and spermine. Inhibited by 5'-([(Z)-4-amino-2-butenyl]methylamino)-5'-deoxyadenosine (MDL 73811). Its function is as follows. In association with the catalytically inactive AdoMetDC prozyme, catalyzes the decarboxylation of S-adenosyl-L-methionine which is essential for the biosynthesis of the polyamine spermidine. Required for growth and survival during the bloodstream life cycle stage. In Trypanosoma brucei brucei, this protein is S-adenosylmethionine decarboxylase proenzyme.